The following is a 287-amino-acid chain: Inorganic pyrophosphatase (287 aa).

Diphosphate is bound at residue R79. Residues D116, D121, and D153 each coordinate Mg(2+). Over residues 244-258 (NSTLGNSDSVDSSKL) the composition is skewed to polar residues. Residues 244 to 269 (NSTLGNSDSVDSSKLASIPRGENLPP) form a disordered region.

It belongs to the PPase family. Mg(2+) is required as a cofactor.

Its subcellular location is the cytoplasm. It carries out the reaction diphosphate + H2O = 2 phosphate + H(+). Functionally, involved in osmoadaptation. In Emericella nidulans (strain FGSC A4 / ATCC 38163 / CBS 112.46 / NRRL 194 / M139) (Aspergillus nidulans), this protein is Inorganic pyrophosphatase (ipp1).